A 436-amino-acid chain; its full sequence is MSETHLSTQKFADFPLHKEVHQALNEAGFEFCTPIQALSLPILLEKKDIAGQAQTGTGKTLAFLVATFNHLLSTPIPAERQLNQPRAIIMAPTRELAIQIAKDANLLAKHTGLKVGIVYGGEGYEVQRKVLDKGVDILIGTTGRIIDYVRQGVINVSCIQAVVLDEADRMFDLGFIKDIRFLFRRMPDAKSRLNMLFSATLSMKVQELAYDHMNEPEKVEIAPNEKTSKNIKEEIFYPSMEEKMPLLLSLLEEDWPEKAIVFSNTKHSCEKVWSWLEGDGHRAGLLTGDVPQKKRLRILEQFTKGDIDILVATDVAARGLHISDVSHVYNYDLPDDCEDYVHRIGRTGRAGQKGVSVSFACEEYALNLPAIESYIQHSIPVTSYDSDALLDDIPPPVRIHRKPSTHTRNTRDRSSGRPQGGQRNGPRRHDKTRRHS.

Residues 9–37 (QKFADFPLHKEVHQALNEAGFEFCTPIQA) carry the Q motif motif. Residues 40-219 (LPILLEKKDI…YDHMNEPEKV (180 aa)) enclose the Helicase ATP-binding domain. Position 53-60 (53-60 (AQTGTGKT)) interacts with ATP. A DEAD box motif is present at residues 165-168 (DEAD). Positions 243–390 (KMPLLLSLLE…VTSYDSDALL (148 aa)) constitute a Helicase C-terminal domain. The tract at residues 392–436 (DIPPPVRIHRKPSTHTRNTRDRSSGRPQGGQRNGPRRHDKTRRHS) is disordered. Over residues 425 to 436 (GPRRHDKTRRHS) the composition is skewed to basic residues.

The protein belongs to the DEAD box helicase family. RhlB subfamily. As to quaternary structure, component of the RNA degradosome, which is a multiprotein complex involved in RNA processing and mRNA degradation.

It localises to the cytoplasm. The enzyme catalyses ATP + H2O = ADP + phosphate + H(+). DEAD-box RNA helicase involved in RNA degradation. Has RNA-dependent ATPase activity and unwinds double-stranded RNA. The sequence is that of ATP-dependent RNA helicase RhlB from Shewanella pealeana (strain ATCC 700345 / ANG-SQ1).